We begin with the raw amino-acid sequence, 223 residues long: Ribonuclease 3 (223 aa).

In terms of domain architecture, RNase III spans 5 to 127 (LQRLEKKIGY…IIGAIYLDSD (123 aa)). Residue glutamate 40 coordinates Mg(2+). Aspartate 44 is an active-site residue. Mg(2+)-binding residues include aspartate 113 and glutamate 116. Glutamate 116 is a catalytic residue. In terms of domain architecture, DRBM spans 154–223 (DPKTRLQEYL…AADIALGQLN (70 aa)).

The protein belongs to the ribonuclease III family. As to quaternary structure, homodimer. The cofactor is Mg(2+).

It localises to the cytoplasm. It carries out the reaction Endonucleolytic cleavage to 5'-phosphomonoester.. In terms of biological role, digests double-stranded RNA. Involved in the processing of primary rRNA transcript to yield the immediate precursors to the large and small rRNAs (23S and 16S). Processes some mRNAs, and tRNAs when they are encoded in the rRNA operon. Processes pre-crRNA and tracrRNA of type II CRISPR loci if present in the organism. This Aliivibrio fischeri (strain ATCC 700601 / ES114) (Vibrio fischeri) protein is Ribonuclease 3.